Consider the following 310-residue polypeptide: Glutaminase 1 (310 aa).

Serine 66, asparagine 117, glutamate 161, asparagine 168, tyrosine 192, tyrosine 244, and valine 262 together coordinate substrate. Residue lysine 294 is modified to N6-acetyllysine.

This sequence belongs to the glutaminase family. In terms of assembly, homotetramer.

It carries out the reaction L-glutamine + H2O = L-glutamate + NH4(+). This is Glutaminase 1 from Escherichia coli O6:H1 (strain CFT073 / ATCC 700928 / UPEC).